The following is a 417-amino-acid chain: Phosphoglycerate kinase, cytosolic (417 aa).

Residues V23, D24, F25, N26, R39, S61, H62, G64, R65, R132, H168, and R169 each coordinate (2R)-3-phosphoglycerate. Residues G214 and A215 each contribute to the ADP site. G214 lines the CDP pocket. AMP is bound by residues A215 and K216. A215 is a binding site for ATP. Mg(2+) is bound at residue A215. (2R)-3-phosphoglycerate is bound at residue K216. D219 is a CDP binding site. D219 lines the Mg(2+) pocket. K220 and G238 together coordinate ADP. K220 lines the AMP pocket. K220 lines the ATP pocket. Residue G238 participates in CDP binding. The AMP site is built by A239 and A311. ATP-binding residues include A239 and A311. ADP-binding residues include A311 and N335. 2 residues coordinate CDP: G336 and F341. 4 residues coordinate ADP: F341, E342, D374, and T375. AMP is bound at residue E342. 3 residues coordinate ATP: E342, D374, and T375. A Mg(2+)-binding site is contributed by D374.

The protein belongs to the phosphoglycerate kinase family. In terms of assembly, monomer. Requires Mg(2+) as cofactor.

It is found in the cytoplasm. The enzyme catalyses (2R)-3-phosphoglycerate + ATP = (2R)-3-phospho-glyceroyl phosphate + ADP. It functions in the pathway carbohydrate degradation; glycolysis; pyruvate from D-glyceraldehyde 3-phosphate: step 2/5. The sequence is that of Phosphoglycerate kinase, cytosolic (PGKB) from Leishmania mexicana.